Reading from the N-terminus, the 1364-residue chain is Collagen alpha-2(I) chain (1364 aa).

An N-terminal signal peptide occupies residues 1-22 (MLSFVDTRTLLLLAVTSCLATC). Position 23 is a pyrrolidone carboxylic acid (Gln-23). The propeptide at 23-79 (QSLQEATARKGPSGDRGPRGERGPPGPPGRDGDDGIPGPPGPPGPPGPPGLGGNFAA) is N-terminal propeptide. Positions 26–1128 (QEATARKGPS…QPRSPTSLRP (1103 aa)) are disordered. Basic and acidic residues predominate over residues 34–44 (PSGDRGPRGER). Residues 59–71 (PGPPGPPGPPGPP) show a composition bias toward pro residues. The residue at position 80 (Gln-80) is a Pyrrolidone carboxylic acid. Allysine is present on Lys-84. Residues 93 to 130 (LMGPRGPPGASGAPGPQGFQGPPGEPGEPGQTGPAGAR) are compositionally biased toward low complexity. A 4-hydroxyproline mark is found at Pro-100, Pro-106, Pro-115, Pro-118, Pro-121, Pro-133, Pro-136, Pro-145, Pro-151, Pro-166, Pro-169, and Pro-172. Over residues 139 to 153 (AGEDGHPGKPGRPGE) the composition is skewed to basic and acidic residues. 5-hydroxylysine; alternate is present on Lys-175. Residue Lys-175 is glycosylated (O-linked (Gal...) hydroxylysine; alternate). A 4-hydroxyproline mark is found at Pro-190 and Pro-193. A 5-hydroxylysine modification is found at Lys-196. 4-hydroxyproline is present on residues Pro-199, Pro-202, Pro-208, Pro-217, Pro-226, Pro-253, Pro-256, and Pro-259. The span at 223-252 (VGAPGPAGARGSDGSVGPVGPAGPIGSAGP) shows a compositional bias: low complexity. Lys-262 is subject to 5-hydroxylysine. Residues Pro-271, Pro-286, Pro-295, and Pro-304 each carry the 4-hydroxyproline modification. Residues 277–291 (AGPRGEVGLPGLSGP) are compositionally biased toward low complexity. Over residues 298 to 319 (PGANGLPGAKGAAGLPGVAGAP) the composition is skewed to low complexity. Lys-307 carries the post-translational modification 5-hydroxylysine. 4-hydroxyproline occurs at positions 313, 319, 322, 328, and 346. Low complexity predominate over residues 328–343 (PGPVGAAGATGARGLV). 5-hydroxylysine is present on Lys-352. A 4-hydroxyproline mark is found at Pro-361, Pro-367, Pro-370, Pro-391, Pro-394, Pro-400, Pro-406, Pro-439, and Pro-442. Positions 396–406 (LRGNPGSRGLP) are enriched in low complexity. 2 stretches are compositionally biased toward low complexity: residues 468–487 (LPGI…RGEP) and 511–535 (AGLA…PGLQ). Positions 536–545 (GVQGGKGEQG) are enriched in gly residues. 4 stretches are compositionally biased toward low complexity: residues 592–609 (PGES…SRGP), 621–643 (EPGV…PGER), 666–688 (SPGR…AGAN), and 715–735 (VGPA…QPGA). Residues 736 to 745 (KGERGTKGPK) show a composition bias toward basic and acidic residues. The segment covering 748-763 (NGPVGPTGPVGAAGPS) has biased composition (low complexity). The span at 773–782 (GSRGDGGPPG) shows a compositional bias: gly residues. 5 stretches are compositionally biased toward low complexity: residues 783 to 793 (ATGFPGAAGRT), 861 to 874 (PQGL…LGLP), 891 to 930 (EPGP…NPGN), 948 to 961 (YPGN…AGAP), and 978 to 999 (EPGP…PSGP). Over residues 1003-1014 (RGDKGEPGDKGP) the composition is skewed to basic and acidic residues. Pro residues predominate over residues 1087–1101 (AGPPGPPGPPGPPGP). Positions 1118 to 1364 (DQPRSPTSLR…RLNIGPVCFK (247 aa)) are cleaved as a propeptide — C-terminal propeptide. Positions 1131–1364 (YEVDATLKSL…RLNIGPVCFK (234 aa)) constitute a Fibrillar collagen NC1 domain. Cystine bridges form between Cys-1161-Cys-1193, Cys-1201-Cys-1362, and Cys-1270-Cys-1315. Ca(2+)-binding residues include Asp-1179, Asn-1181, Gln-1182, Cys-1184, and Asp-1187. An N-linked (GlcNAc...) asparagine glycan is attached at Asn-1265.

This sequence belongs to the fibrillar collagen family. In terms of assembly, trimers of one alpha 2(I) and two alpha 1(I) chains. Interacts (via C-terminus) with TMEM131 (via PapD-L domain); the interaction is direct and is involved in assembly and TRAPPIII ER-to-Golgi transport complex-dependent secretion of collagen. In terms of processing, prolines at the third position of the tripeptide repeating unit (G-X-Y) are hydroxylated in some or all of the chains. In terms of tissue distribution, forms the fibrils of tendon, ligaments and bones. In bones the fibrils are mineralized with calcium hydroxyapatite.

The protein resides in the secreted. Its subcellular location is the extracellular space. It localises to the extracellular matrix. In terms of biological role, type I collagen is a member of group I collagen (fibrillar forming collagen). The sequence is that of Collagen alpha-2(I) chain (COL1A2) from Bos taurus (Bovine).